The primary structure comprises 740 residues: Ribosome-releasing factor 2, mitochondrial (740 aa).

The N-terminal 29 residues, 1–29 (MLKYAWQSGPKQSNRWLWHLSNQIWKRSY), are a transit peptide targeting the mitochondrion. The tr-type G domain maps to 31–310 (SKIRNIGILA…AVNAYLPAPE (280 aa)). GTP-binding positions include 40–47 (AHIDAGKT), 104–108 (DTPGH), and 158–161 (NKMD).

The protein belongs to the TRAFAC class translation factor GTPase superfamily. Classic translation factor GTPase family. EF-G/EF-2 subfamily.

Its subcellular location is the mitochondrion. Mitochondrial GTPase that mediates the disassembly of ribosomes from messenger RNA at the termination of mitochondrial protein biosynthesis. Not involved in the GTP-dependent ribosomal translocation step during translation elongation. This Drosophila melanogaster (Fruit fly) protein is Ribosome-releasing factor 2, mitochondrial.